The primary structure comprises 78 residues: Translational regulator CsrA (78 aa).

Belongs to the CsrA/RsmA family. In terms of assembly, homodimer; the beta-strands of each monomer intercalate to form a hydrophobic core, while the alpha-helices form wings that extend away from the core.

It localises to the cytoplasm. A translational regulator that binds mRNA to regulate translation initiation and/or mRNA stability. Usually binds in the 5'-UTR at or near the Shine-Dalgarno sequence preventing ribosome-binding, thus repressing translation. Its main target seems to be the major flagellin gene, while its function is anatagonized by FliW. The chain is Translational regulator CsrA from Borrelia hermsii (strain HS1 / DAH).